A 180-amino-acid chain; its full sequence is Ribosome maturation factor RimM (180 aa).

The PRC barrel domain occupies 97–176; the sequence is EGEFFYCDLI…KITTNNAKTL (80 aa).

The protein belongs to the RimM family. As to quaternary structure, binds ribosomal protein uS19.

The protein resides in the cytoplasm. An accessory protein needed during the final step in the assembly of 30S ribosomal subunit, possibly for assembly of the head region. Essential for efficient processing of 16S rRNA. May be needed both before and after RbfA during the maturation of 16S rRNA. It has affinity for free ribosomal 30S subunits but not for 70S ribosomes. This Helicobacter acinonychis (strain Sheeba) protein is Ribosome maturation factor RimM.